The following is a 214-amino-acid chain: 3-isopropylmalate dehydratase small subunit (214 aa).

This sequence belongs to the LeuD family. LeuD type 1 subfamily. As to quaternary structure, heterodimer of LeuC and LeuD.

The enzyme catalyses (2R,3S)-3-isopropylmalate = (2S)-2-isopropylmalate. Its pathway is amino-acid biosynthesis; L-leucine biosynthesis; L-leucine from 3-methyl-2-oxobutanoate: step 2/4. Its function is as follows. Catalyzes the isomerization between 2-isopropylmalate and 3-isopropylmalate, via the formation of 2-isopropylmaleate. The polypeptide is 3-isopropylmalate dehydratase small subunit (Pseudomonas putida (strain GB-1)).